A 301-amino-acid chain; its full sequence is Putative S-adenosyl-L-methionine-dependent methyltransferase MUL_0450 (301 aa).

S-adenosyl-L-methionine is bound by residues Asp127 and 156–157; that span reads DL.

The protein belongs to the UPF0677 family.

In terms of biological role, exhibits S-adenosyl-L-methionine-dependent methyltransferase activity. This chain is Putative S-adenosyl-L-methionine-dependent methyltransferase MUL_0450, found in Mycobacterium ulcerans (strain Agy99).